A 262-amino-acid polypeptide reads, in one-letter code: MSRHIPKKRFGQNFLQDAFIIHSIVAAVDARPGDVVVEIGPGLGALTRPLLRALPQLHVVEIDRDIIARLAAEFPPERLVIHEGDALAFDFGALAHEQPLKLVGNLPYNISTPLLFHLATYADRVTDMHFMLQKEVVDRMVADPGCADYGRLTVMLQYRFAMERLIDVPPESFDPPPKVDSAVVRMIPHAELPWPADDEENLSALVAQAFAQRRKTLRNNLRGWLDDDDFAALGIDPQRRPETLTLREFVLLSNRHGEKGRQ.

S-adenosyl-L-methionine contacts are provided by N13, L15, G40, E61, D85, and N105.

It belongs to the class I-like SAM-binding methyltransferase superfamily. rRNA adenine N(6)-methyltransferase family. RsmA subfamily.

Its subcellular location is the cytoplasm. The enzyme catalyses adenosine(1518)/adenosine(1519) in 16S rRNA + 4 S-adenosyl-L-methionine = N(6)-dimethyladenosine(1518)/N(6)-dimethyladenosine(1519) in 16S rRNA + 4 S-adenosyl-L-homocysteine + 4 H(+). Its function is as follows. Specifically dimethylates two adjacent adenosines (A1518 and A1519) in the loop of a conserved hairpin near the 3'-end of 16S rRNA in the 30S particle. May play a critical role in biogenesis of 30S subunits. This Laribacter hongkongensis (strain HLHK9) protein is Ribosomal RNA small subunit methyltransferase A.